Here is a 334-residue protein sequence, read N- to C-terminus: DnaJ protein homolog 1 (334 aa).

One can recognise a J domain in the interval 4–68 (DFYKILGLER…KKRDIFDNYG (65 aa)). Serine 187 carries the post-translational modification Phosphoserine.

It is found in the cytoplasm. This Drosophila melanogaster (Fruit fly) protein is DnaJ protein homolog 1 (DnaJ-1).